Consider the following 507-residue polypeptide: 3-[(3aS,4S,7aS)-7a-methyl-1,5-dioxo-octahydro-1H-inden-4-yl]propanoyl:CoA ligase (507 aa).

Residues 177 to 185 (TSGTTGRSK), aspartate 391, arginine 406, and lysine 497 each bind ATP.

Belongs to the ATP-dependent AMP-binding enzyme family.

The enzyme catalyses 3-[(3aS,4S,7aS)-7a-methyl-1,5-dioxo-octahydro-1H-inden-4-yl]propanoate + ATP + CoA = 3-[(3aS,4S,7aS)-7a-methyl-1,5-dioxo-octahydro-1H-inden-4-yl]propanoyl-CoA + AMP + diphosphate. It catalyses the reaction 5-hydroxy-3-[(3aS,4S,5R,7aS)-7a-methyl-1,5-dioxo-octahydro-1H-inden-4-yl]propanoate + ATP + CoA = 3-[(3aS,4S,5R,7aS)-5-hydroxy-7a-methyl-1-oxo-octahydro-1H-inden-4-yl]propanoyl-CoA + AMP + diphosphate. In terms of biological role, involved in the catabolism of the rings C and D of cholesterol. Catalyzes the ATP-dependent CoA thioesterification of 3aalpha-H-4alpha(3'-propanoate)-7abeta-methylhexahydro-1,5-indanedione (HIP) to yield HIP-CoA. It can also use the hydroxylated analogs of HIP, 5alpha-OH HIP and 1beta-OH HIP. It requires that the side chain at C17 is completely removed. The protein is 3-[(3aS,4S,7aS)-7a-methyl-1,5-dioxo-octahydro-1H-inden-4-yl]propanoyl:CoA ligase of Mycobacterium tuberculosis (strain ATCC 25618 / H37Rv).